A 417-amino-acid polypeptide reads, in one-letter code: MASAMELSLLNPAMHHYGIAAKTASHLPVVPARRASSGAVRFRVRAAAAAPPAPAAKPGSPKKRGKTEVNESLLTPRFYTTDFDEMEQLFNAEINKQLNQDEFDALLQEFKTDYNQTHFIRNPEFKEAADKMQGPLRQIFVEFLERSCTAEFSGFLLYKELGRRLKKTNPVVAEIFSLMSRDEARHAGFLNKGLSDFNLALDLGFLTKARKYTFFKPKFIFYATYLSEKIGYWRYITIFRHLKANPEYQVYPIFKYFENWCQDENRHGDFFSALLKAQPQFLNDWKAKLWSRFFCLSVYITMYLNDCQRSAFYEGIGLNTKEFDMHVIYETNRTTARIFPAVPDVENPEFKRKLDRMVDINLKIISIGESNDLPLVKNLKRVPLIAQLVSEIIAAYLMPPIESGSVDFAEFEPKLVY.

Residues Met1 to Arg45 constitute a chloroplast transit peptide.

Belongs to the AcsF family. Fe cation serves as cofactor.

The protein localises to the plastid. It localises to the chloroplast membrane. The catalysed reaction is Mg-protoporphyrin IX 13-monomethyl ester + 3 NADPH + 3 O2 + 2 H(+) = 3,8-divinyl protochlorophyllide a + 3 NADP(+) + 5 H2O. It participates in porphyrin-containing compound metabolism; chlorophyll biosynthesis. Catalyzes the formation of the isocyclic ring in chlorophyll biosynthesis. Mediates the cyclase reaction, which results in the formation of divinylprotochlorophyllide (Pchlide) characteristic of all chlorophylls from magnesium-protoporphyrin IX 13-monomethyl ester (MgPMME). The polypeptide is Magnesium-protoporphyrin IX monomethyl ester [oxidative] cyclase, chloroplastic (CRD1) (Hordeum vulgare (Barley)).